The following is an 86-amino-acid chain: Selenoprotein W (86 aa).

A cross-link (cysteinyl-selenocysteine (Cys-Sec); redox-active) is located at residues 10-13 (CGGU). Position 13 (selenocysteine 13) is a non-standard amino acid, selenocysteine.

This sequence belongs to the SelWTH family. Selenoprotein W subfamily.

It localises to the cytoplasm. Its function is as follows. Plays a role as a glutathione (GSH)-dependent antioxidant. May be involved in a redox-related process. May play a role in the myopathies of selenium deficiency. This Danio rerio (Zebrafish) protein is Selenoprotein W.